The primary structure comprises 126 residues: Prefoldin subunit beta (126 aa).

It belongs to the prefoldin subunit beta family. As to quaternary structure, heterohexamer of two alpha and four beta subunits.

The protein resides in the cytoplasm. Molecular chaperone capable of stabilizing a range of proteins. Seems to fulfill an ATP-independent, HSP70-like function in archaeal de novo protein folding. The protein is Prefoldin subunit beta (pfdB) of Pyrobaculum aerophilum (strain ATCC 51768 / DSM 7523 / JCM 9630 / CIP 104966 / NBRC 100827 / IM2).